A 275-amino-acid chain; its full sequence is Phosphate import ATP-binding protein PstB 1 (275 aa).

In terms of domain architecture, ABC transporter spans 22–261 (IETRDLSVYY…DRTEKIFNSP (240 aa)). 54-61 (GPSGCGKS) contributes to the ATP binding site.

It belongs to the ABC transporter superfamily. Phosphate importer (TC 3.A.1.7) family. As to quaternary structure, the complex is composed of two ATP-binding proteins (PstB), two transmembrane proteins (PstC and PstA) and a solute-binding protein (PstS).

It localises to the cell inner membrane. The catalysed reaction is phosphate(out) + ATP + H2O = ADP + 2 phosphate(in) + H(+). Its function is as follows. Part of the ABC transporter complex PstSACB involved in phosphate import. Responsible for energy coupling to the transport system. This Synechococcus sp. (strain JA-3-3Ab) (Cyanobacteria bacterium Yellowstone A-Prime) protein is Phosphate import ATP-binding protein PstB 1.